The following is a 365-amino-acid chain: 5-hydroxytryptamine receptor 1F (365 aa).

At 1-24 the chain is on the extracellular side; it reads MDFLNSSDQNLTSEELLNRMPSKI. N-linked (GlcNAc...) asparagine glycosylation is found at asparagine 5 and asparagine 10. Residues 25-49 form a helical membrane-spanning segment; that stretch reads LVSLTLSGLALMTTTINSLVIAAII. The Cytoplasmic segment spans residues 50 to 59; that stretch reads VTRKLHHPAN. A helical membrane pass occupies residues 60 to 81; the sequence is YLICSLAVTDFLVAVLVMPFSI. The Extracellular portion of the chain corresponds to 82–96; the sequence is VYIVRESWIMGQVVC. Cysteine 96 and cysteine 172 form a disulfide bridge. The chain crosses the membrane as a helical span at residues 97–119; the sequence is DIWLSVDITCCTCSILHLSAIAL. Serotonin-binding residues include aspartate 103 and cysteine 107. Residues 120–122 carry the DRY motif; important for ligand-induced conformation changes motif; it reads DRY. Residues 120-139 are Cytoplasmic-facing; the sequence is DRYRAITDAVEYARKRTPKH. Residues 140-159 traverse the membrane as a helical segment; that stretch reads AGIMITIVWIISVFISMPPL. Residues 160 to 178 are Extracellular-facing; sequence FWRHQGTSRDDECIIKHDH. Residues 179-202 form a helical membrane-spanning segment; sequence IVSTIYSTFGAFYIPLALILILYY. Residues 203 to 291 lie on the Cytoplasmic side of the membrane; that stretch reads KIYRAAKTLY…KISGTRERKA (89 aa). A helical transmembrane segment spans residues 292-315; it reads ATTLGLILGAFVICWLPFFVKELV. At 316–327 the chain is on the extracellular side; that stretch reads VNVCDKCKISEE. The chain crosses the membrane as a helical span at residues 328–350; it reads MSNFLAWLGYLNSLINPLIYTIF. Residues 343-347 carry the NPxxY motif; important for ligand-induced conformation changes and signaling motif; it reads NPLIY. Topologically, residues 351-365 are cytoplasmic; it reads NEDFKKAFQKLVRCR.

It belongs to the G-protein coupled receptor 1 family.

The protein localises to the cell membrane. In terms of biological role, G-protein coupled receptor for 5-hydroxytryptamine (serotonin). Also functions as a receptor for various alkaloids and psychoactive substances. Ligand binding causes a conformation change that triggers signaling via guanine nucleotide-binding proteins (G proteins) and modulates the activity of downstream effectors, such as adenylate cyclase. HTR1F is coupled to G(i)/G(o) G alpha proteins and mediates inhibitory neurotransmission by inhibiting adenylate cyclase activity. In Pan troglodytes (Chimpanzee), this protein is 5-hydroxytryptamine receptor 1F (HTR1F).